The following is a 553-amino-acid chain: Undecaprenyl phosphate-alpha-4-amino-4-deoxy-L-arabinose arabinosyl transferase (553 aa).

Helical transmembrane passes span 6–26 (ACKV…LLPL), 89–109 (FGSV…AMMM), 115–135 (IAFA…IGTY), 180–200 (FMTK…PIVI), 208–228 (IVCF…PWVI), 258–278 (IAPF…WLGL), 293–313 (NPEM…FSIA), 317–337 (LPTY…KFGV), 352–372 (GMVN…MEVV), 386–406 (WVLA…CFAL), and 410–430 (YWLL…HALP).

Belongs to the glycosyltransferase 83 family.

It is found in the cell inner membrane. It carries out the reaction 4-amino-4-deoxy-alpha-L-arabinopyranosyl di-trans,octa-cis-undecaprenyl phosphate + lipid IVA = lipid IIA + di-trans,octa-cis-undecaprenyl phosphate.. It functions in the pathway lipopolysaccharide metabolism; 4-amino-4-deoxy-beta-L-arabinose-lipid A biosynthesis. Catalyzes the transfer of the L-Ara4N moiety of the glycolipid undecaprenyl phosphate-alpha-L-Ara4N to lipid A. The modified arabinose is attached to lipid A and is required for resistance to polymyxin and cationic antimicrobial peptides. This Photorhabdus laumondii subsp. laumondii (strain DSM 15139 / CIP 105565 / TT01) (Photorhabdus luminescens subsp. laumondii) protein is Undecaprenyl phosphate-alpha-4-amino-4-deoxy-L-arabinose arabinosyl transferase (arnT).